Reading from the N-terminus, the 669-residue chain is Glycerol uptake/efflux facilitator protein (669 aa).

Residues 1–16 (MSNPQKALNDFLSSES) are compositionally biased toward polar residues. 2 disordered regions span residues 1–99 (MSNP…TYVP) and 123–147 (QDIN…RGQT). Residues 1-254 (MSNPQKALND…WSSVKNTYLK (254 aa)) are Extracellular-facing. Residues 50–68 (NNNNNNNNNNNNSNNNNNG) show a composition bias toward low complexity. Positions 72-81 (GNDDDYDYEM) are enriched in acidic residues. Composition is skewed to polar residues over residues 87 to 99 (SPQS…TYVP) and 133 to 147 (PSAS…RGQT). Serine 150 is subject to Phosphoserine. The tract at residues 167–215 (HTIPESHLSRRRSRSRATSNAGHSANTGATNGRTTGAQTNMESNESPRN) is disordered. A Phosphothreonine modification is found at threonine 168. Residues 191–206 (ANTGATNGRTTGAQTN) are compositionally biased toward low complexity. Phosphoserine is present on residues serine 209 and serine 212. A helical transmembrane segment spans residues 255 to 275 (EFLAEFMGTMVMIIFGSAVVC). The Cytoplasmic portion of the chain corresponds to 276-325 (QVNVAGKIQQDNFNVALDNLNVTGSSAETIDAMKSLTSLVSSVAGGTFDD). Residues 326-346 (VALGWAAAVVMGYFCAGGSAI) form a helical membrane-spanning segment. At 347 to 369 (SGAHLNPSITLANLVYRGFPLKK) the chain is on the extracellular side. An NPA 1 motif is present at residues 352-354 (NPS). The chain crosses the membrane as a helical span at residues 370-390 (VPYYFAGQLIGAFTGALILFI). The Cytoplasmic segment spans residues 391-446 (WYKRVLQEAYSDWWMNESVAGMFCVFPKPYLSSGRQFFSEFLCGAMLQAGTFALTD). A helical transmembrane segment spans residues 447-467 (PYTCLSSDVFPLMMFILIFII). At 468–506 (NASMAYQTGTAMNLARDLGPRLALYAVGFDHKMLWVHHH) the chain is on the extracellular side. Residues 480-482 (NLA) carry the NPA 2 motif. Residues 507 to 527 (HFFWVPMVGPFIGALMGGLVY) form a helical membrane-spanning segment. Topologically, residues 528-669 (DVCIYQGHES…SHYGNAKKVT (142 aa)) are cytoplasmic. 2 disordered regions span residues 591 to 615 (LQKT…VQFK) and 635 to 669 (DSIE…KKVT). Residues 638–655 (ETASLGATTTDSIGLSDT) are compositionally biased toward polar residues.

This sequence belongs to the MIP/aquaporin (TC 1.A.8) family.

It localises to the membrane. Channel protein for glycerol. Has a role in both glycerol influx and efflux. Plays a role in osmoregulation: under osmotic stress the channel is apparently closed to allow accumulation of glycerol in the cell under hyperosmotic conditions. This Saccharomyces cerevisiae (strain ATCC 204508 / S288c) (Baker's yeast) protein is Glycerol uptake/efflux facilitator protein (FPS1).